The primary structure comprises 254 residues: Glc operon transcriptional activator (254 aa).

The HTH gntR-type domain occupies 6 to 74 (RPICEVVAES…QGRDSRVARL (69 aa)). A DNA-binding region (H-T-H motif) is located at residues 34-53 (ERRLCEKLGFSRSALREGLT).

Transcriptional activator of the glcDEFGB operon which is associated with glycolate utilization, and encodes malate synthase G and the genes needed for glycolate oxidase activity. Also negatively regulates the transcription of its own gene. Glycolate acts as an effector, but GlcC can also use acetate as an alternative effector. This chain is Glc operon transcriptional activator (glcC), found in Escherichia coli O6:H1 (strain CFT073 / ATCC 700928 / UPEC).